A 34-amino-acid chain; its full sequence is Protamine-Z1/Z2 (34 aa).

Positions 1–34 (PRRRRRSSRPVRRRRRYRRSTVARRRRRVVRRRR) are disordered.

As to expression, testis.

The protein resides in the nucleus. It localises to the chromosome. Functionally, protamines substitute for histones in the chromatin of sperm during the haploid phase of spermatogenesis. They compact sperm DNA into a highly condensed, stable and inactive complex. This Thunnus thynnus (Atlantic bluefin tuna) protein is Protamine-Z1/Z2.